We begin with the raw amino-acid sequence, 3410 residues long: Genome polyprotein (3410 aa).

The Cytoplasmic portion of the chain corresponds to 1-103 (MTKKPGRPGR…DFVHLPKKKS (103 aa)). Positions 2-15 (TKKPGRPGRNRAVN) are interaction with host EXOC1. The interval 38 to 73 (LLDGRGPLRMVLAILAFFRFTALKPTAGLLKRWGMM) is hydrophobic; homodimerization of capsid protein C. A propeptide spans 103 to 119 (SGVSIIGRMLVFSFTAA) (ER anchor for the capsid protein C, removed in mature form by serine protease NS3). The chain crosses the membrane as a helical span at residues 104–124 (GVSIIGRMLVFSFTAAVRVTL). Over 125–245 (ENGMSLMKIQ…ATSYLTKAES (121 aa)) the chain is Extracellular. A helical transmembrane segment spans residues 246–266 (WALRNPGYALVAAVLGWSLGT). Residues 267 to 271 (SNAQK) lie on the Cytoplasmic side of the membrane. Residues 272-286 (VIFTVMILLIAPAYS) traverse the membrane as a helical segment. At 287 to 739 (IRCVGVENRD…QIFGGMFRTL (453 aa)) the chain is on the extracellular side. Cystine bridges form between Cys-289–Cys-316, Cys-346–Cys-402, Cys-346–Cys-407, Cys-360–Cys-391, Cys-378–Cys-402, and Cys-378–Cys-407. Residues 384 to 397 (DRGWGNGCGLFGKG) are fusion peptide. Residue Asn-440 is glycosylated (N-linked (GlcNAc...) asparagine; by host). 2 cysteine pairs are disulfide-bonded: Cys-476-Cys-574 and Cys-591-Cys-622. Residues 740–760 (FGGMSWFTQIMIGALCCWLGI) traverse the membrane as a helical segment. At 761-766 (NARDRT) the chain is on the cytoplasmic side. The helical transmembrane segment at 767 to 787 (IAVTFLAVGGVLVFLATSVNA) threads the bilayer. The Extracellular portion of the chain corresponds to 788-1165 (DSGCALDLKR…IALQEVMRKR (378 aa)). Intrachain disulfides connect Cys-791-Cys-802, Cys-842-Cys-928, Cys-964-Cys-1009, Cys-1066-Cys-1115, Cys-1077-Cys-1098, Cys-1077-Cys-1099, Cys-1098-Cys-1102, and Cys-1099-Cys-1102. N-linked (GlcNAc...) asparagine; by host glycosylation occurs at Asn-915. Residues 1166-1186 (ILGRHITWMVIAVFMAMILGG) form a helical membrane-spanning segment. Over 1187–1214 (LSYRDLGRYLVLVGAAFAERNSGGDLLH) the chain is Cytoplasmic. The chain crosses the membrane as a helical span at residues 1215–1235 (LVLVATFKVKPMALLGFVLGG). Topologically, residues 1236 to 1242 (RWCRRQS) are lumenal. Residues 1243–1263 (LLLSIGAVLVNFALEFQGGYF) form a helical membrane-spanning segment. The Cytoplasmic portion of the chain corresponds to 1264-1284 (ELVDSLALALLFVKAVVQTDT). The chain crosses the membrane as a helical span at residues 1285 to 1305 (TSVSLPLLAALAPAGCYTVLG). Topologically, residues 1306–1335 (THRFIMLTLVLVTFLGCKKTASVKKAGTAA) are lumenal. The chain crosses the membrane as a helical span at residues 1336 to 1356 (VGVVLGMVGMKTIPMLGMLMV). Over 1357 to 1363 (TSRARRS) the chain is Cytoplasmic. A helical transmembrane segment spans residues 1364-1384 (WPLHEAMAAVGILCALFGALA). Residues 1385–1387 (ETE) are Lumenal-facing. The chain crosses the membrane as a helical span at residues 1388–1408 (VDLAGPLAAAGLIVMAYVISG). The Cytoplasmic portion of the chain corresponds to 1409 to 1464 (RSNDLSIKKVEDVKWSDEAEVTGESVSYHVSLDVRGDPTLTEDSGPGLEKVLLKVG). The interval 1415–1454 (IKKVEDVKWSDEAEVTGESVSYHVSLDVRGDPTLTEDSGP) is interacts with and activates NS3 protease. The helical intramembrane region spans 1465-1485 (LMAISGIYPVAIPFALGAWFF). At 1486 to 2158 (LEKRCKRAGA…KAALENSPEM (673 aa)) the chain is on the cytoplasmic side. A Peptidase S7 domain is found at 1493-1670 (AGALWDIPSP…ENVGQEDGAE (178 aa)). Active-site charge relay system; for serine protease NS3 activity residues include His-1543, Asp-1567, and Ser-1627. Positions 1673-1829 (DNWFRKRELT…PSNSPIIDEE (157 aa)) constitute a Helicase ATP-binding domain. The important for RNA-binding stretch occupies residues 1677–1680 (RKRE). ATP is bound at residue 1686 to 1693 (LHPGAGKT). Positions 1777–1780 (DEAH) match the DEAH box motif. The Helicase C-terminal domain occupies 1839–2006 (SGYEWIIEFD…QLYTPEREKT (168 aa)). Lys-1881 is modified (N6-acetyllysine; by host). The interval 2153-2157 (ENSPE) is regulates the ATPase activity of NS3 helicase. The chain crosses the membrane as a helical span at residues 2159–2179 (IETFLLCALVCLMTIGLVVVL). At 2180-2185 (VRGKGP) the chain is on the lumenal side. An intramembrane region (helical) is located at residues 2186–2205 (GKLAFGMVSIGVMTWLLWSA). Residue Gly-2206 is a topological domain, lumenal. A helical membrane pass occupies residues 2207–2227 (VDPGKIAAAVILVFLLLVVLI). Residues 2228–2242 (PEPEKQRSVQDNQLA) are Cytoplasmic-facing. Residues 2243–2257 (MLMLLIATILGGVAA) form a helical membrane-spanning segment. At 2258 to 2293 (NEMGWLEKTKADLSWVVRGRSSTTTPVVELDMKPAT) the chain is on the lumenal side. Residues 2294-2314 (AWTLYALATTLLTPLFQHLIV) constitute an intramembrane region (helical). The Lumenal portion of the chain corresponds to 2315–2336 (TKYANISLMAIASQAGTLFSMD). The chain crosses the membrane as a helical span at residues 2337 to 2357 (SGIPFSSIELSVPLLALGCWT). Residue Gln-2358 is a topological domain, cytoplasmic. The chain crosses the membrane as a helical span at residues 2359–2379 (ITPCSLILACVLLSTHYAILL). Residues 2380-2420 (PGMQAQAARDAQRRTAAGIMKNAVVDGIVATDIPPLDGAGP) are Lumenal-facing. Residues 2421-2441 (LTEKKLGQLLLFAAAVTGVVI) form a helical membrane-spanning segment. The Cytoplasmic segment spans residues 2442 to 3410 (TRSPRSWSEL…EKRVEFRGVL (969 aa)). Residues 2508–2773 (GGGIGETLGE…DVNLSCGTRA (266 aa)) enclose the mRNA cap 0-1 NS5-type MT domain. Residue Ser-2563 coordinates S-adenosyl-L-methionine. A Phosphoserine modification is found at Ser-2563. Lys-2568 functions as the For 2'-O-MTase activity in the catalytic mechanism. S-adenosyl-L-methionine-binding residues include Gly-2593, Trp-2594, Thr-2611, Lys-2612, Asp-2638, and Val-2639. The active-site For 2'-O-MTase activity is Asp-2653. Ile-2654 serves as a coordination point for S-adenosyl-L-methionine. Residues Lys-2690 and Glu-2726 each act as for 2'-O-MTase activity in the active site. S-adenosyl-L-methionine is bound at residue Tyr-2728. Residues Glu-2947, His-2951, Cys-2956, and Cys-2959 each coordinate Zn(2+). One can recognise a RdRp catalytic domain in the interval 3036 to 3187 (GILYADDTAG…AAPDARFGAA (152 aa)). Zn(2+) contacts are provided by His-3222, Cys-3238, and Cys-3356.

The protein in the N-terminal section; belongs to the class I-like SAM-binding methyltransferase superfamily. mRNA cap 0-1 NS5-type methyltransferase family. Homodimer. Interacts (via N-terminus) with host EXOC1 (via C-terminus); this interaction results in EXOC1 degradation through the proteasome degradation pathway. As to quaternary structure, forms heterodimers with envelope protein E in the endoplasmic reticulum and Golgi. In terms of assembly, homodimer; in the endoplasmic reticulum and Golgi. Interacts with protein prM. Interacts with non-structural protein 1. Homodimer; Homohexamer when secreted. Interacts with envelope protein E. NS1 interacts with NS4B. Interacts with host complement protein CFH; this interaction leads to the degradation of C3. As to quaternary structure, interacts (via N-terminus) with serine protease NS3. In terms of assembly, forms a heterodimer with serine protease NS3. May form homooligomers. Forms a heterodimer with NS2B. Interacts with non-structural protein 2A (via N-terminus). Interacts with NS4B. Interacts with unphosphorylated RNA-directed RNA polymerase NS5; this interaction stimulates RNA-directed RNA polymerase NS5 guanylyltransferase activity. As to quaternary structure, interacts with serine protease NS3. In terms of assembly, homodimer. Interacts with host STAT2; this interaction inhibits the phosphorylation of the latter, and, when all viral proteins are present (polyprotein), targets STAT2 for degradation. Post-translationally, specific enzymatic cleavages in vivo yield mature proteins. Cleavages in the lumen of endoplasmic reticulum are performed by host signal peptidase, whereas cleavages in the cytoplasmic side are performed by serine protease NS3. Signal cleavage at the 2K-4B site requires a prior NS3 protease-mediated cleavage at the 4A-2K site. In terms of processing, cleaved in post-Golgi vesicles by a host furin, releasing the mature small envelope protein M, and peptide pr. This cleavage is incomplete as up to 30% of viral particles still carry uncleaved prM. N-glycosylated. Post-translationally, N-glycosylated. The excreted form is glycosylated and this is required for efficient secretion of the protein from infected cells. In terms of processing, acetylated by host KAT5. Acetylation modulates NS3 RNA-binding and unwinding activities and plays an important positive role for viral replication. Phosphorylated on serines residues. This phosphorylation may trigger NS5 nuclear localization.

Its subcellular location is the virion. It localises to the host nucleus. The protein resides in the host cytoplasm. The protein localises to the host perinuclear region. It is found in the secreted. Its subcellular location is the virion membrane. It localises to the host endoplasmic reticulum membrane. It catalyses the reaction Selective hydrolysis of -Xaa-Xaa-|-Yaa- bonds in which each of the Xaa can be either Arg or Lys and Yaa can be either Ser or Ala.. The enzyme catalyses RNA(n) + a ribonucleoside 5'-triphosphate = RNA(n+1) + diphosphate. It carries out the reaction a ribonucleoside 5'-triphosphate + H2O = a ribonucleoside 5'-diphosphate + phosphate + H(+). The catalysed reaction is ATP + H2O = ADP + phosphate + H(+). It catalyses the reaction a 5'-end (5'-triphosphoguanosine)-ribonucleoside in mRNA + S-adenosyl-L-methionine = a 5'-end (N(7)-methyl 5'-triphosphoguanosine)-ribonucleoside in mRNA + S-adenosyl-L-homocysteine. The enzyme catalyses a 5'-end (N(7)-methyl 5'-triphosphoguanosine)-ribonucleoside in mRNA + S-adenosyl-L-methionine = a 5'-end (N(7)-methyl 5'-triphosphoguanosine)-(2'-O-methyl-ribonucleoside) in mRNA + S-adenosyl-L-homocysteine + H(+). In terms of biological role, plays a role in virus budding by binding to the cell membrane and gathering the viral RNA into a nucleocapsid that forms the core of a mature virus particle. During virus entry, may induce genome penetration into the host cytoplasm after hemifusion induced by the surface proteins. Can migrate to the cell nucleus where it modulates host functions. Overcomes the anti-viral effects of host EXOC1 by sequestering and degrading the latter through the proteasome degradation pathway. Its function is as follows. Inhibits RNA silencing by interfering with host Dicer. Prevents premature fusion activity of envelope proteins in trans-Golgi by binding to envelope protein E at pH6.0. After virion release in extracellular space, gets dissociated from E dimers. Functionally, acts as a chaperone for envelope protein E during intracellular virion assembly by masking and inactivating envelope protein E fusion peptide. prM is the only viral peptide matured by host furin in the trans-Golgi network probably to avoid catastrophic activation of the viral fusion activity in acidic Golgi compartment prior to virion release. prM-E cleavage is inefficient, and many virions are only partially matured. These uncleaved prM would play a role in immune evasion. In terms of biological role, may play a role in virus budding. Exerts cytotoxic effects by activating a mitochondrial apoptotic pathway through M ectodomain. May display a viroporin activity. Its function is as follows. Binds to host cell surface receptor and mediates fusion between viral and cellular membranes. Envelope protein is synthesized in the endoplasmic reticulum in the form of heterodimer with protein prM. They play a role in virion budding in the ER, and the newly formed immature particle is covered with 60 spikes composed of heterodimer between precursor prM and envelope protein E. The virion is transported to the Golgi apparatus where the low pH causes dissociation of PrM-E heterodimers and formation of E homodimers. prM-E cleavage is inefficient, and many virions are only partially matured. These uncleaved prM would play a role in immune evasion. Involved in immune evasion, pathogenesis and viral replication. Once cleaved off the polyprotein, is targeted to three destinations: the viral replication cycle, the plasma membrane and the extracellular compartment. Essential for viral replication. Required for formation of the replication complex and recruitment of other non-structural proteins to the ER-derived membrane structures. Excreted as a hexameric lipoparticle that plays a role against host immune response. Antagonizing the complement function. Binds to the host macrophages and dendritic cells. Inhibits signal transduction originating from Toll-like receptor 3 (TLR3). Functionally, component of the viral RNA replication complex that functions in virion assembly and antagonizes the host alpha/beta interferon antiviral response. In terms of biological role, required cofactor for the serine protease function of NS3. May have membrane-destabilizing activity and form viroporins. Its function is as follows. Displays three enzymatic activities: serine protease, NTPase and RNA helicase. NS3 serine protease, in association with NS2B, performs its autocleavage and cleaves the polyprotein at dibasic sites in the cytoplasm: C-prM, NS2A-NS2B, NS2B-NS3, NS3-NS4A, NS4A-2K and NS4B-NS5. NS3 RNA helicase binds RNA and unwinds dsRNA in the 3' to 5' direction. Regulates the ATPase activity of the NS3 helicase activity. NS4A allows NS3 helicase to conserve energy during unwinding. Functionally, functions as a signal peptide for NS4B and is required for the interferon antagonism activity of the latter. In terms of biological role, induces the formation of ER-derived membrane vesicles where the viral replication takes place. Inhibits interferon (IFN)-induced host STAT1 phosphorylation and nuclear translocation, thereby preventing the establishment of cellular antiviral state by blocking the IFN-alpha/beta pathway. Inhibits STAT2 translocation in the nucleus after IFN-alpha treatment. Its function is as follows. Replicates the viral (+) and (-) RNA genome, and performs the capping of genomes in the cytoplasm. NS5 methylates viral RNA cap at guanine N-7 and ribose 2'-O positions. Besides its role in RNA genome replication, also prevents the establishment of cellular antiviral state by blocking the interferon-alpha/beta (IFN-alpha/beta) signaling pathway. Inhibits host TYK2 and STAT2 phosphorylation, thereby preventing activation of JAK-STAT signaling pathway. The sequence is that of Genome polyprotein from Kokobera virus (KOKV).